The chain runs to 337 residues: Cytoskeleton protein RodZ (337 aa).

Residues 1–111 lie on the Cytoplasmic side of the membrane; sequence MNTEATHDQN…LGKRRKKRDG (111 aa). Residues 19-71 enclose the HTH cro/C1-type domain; that stretch reads LRNAREQLGLSQQAVAERLCLKVSTVRDIEEDKAPADLASTFLRGYIRSYARL. Residues 30 to 49 constitute a DNA-binding region (H-T-H motif); sequence QQAVAERLCLKVSTVRDIEE. The chain crosses the membrane as a helical; Signal-anchor for type II membrane protein span at residues 112-132; that stretch reads WLMTFTWLVLFVVIGLSGAWW. Residues 133-337 lie on the Periplasmic side of the membrane; the sequence is WQDHKAQQEE…TLNAEQSPAQ (205 aa). Positions 145-167 are enriched in polar residues; it reads TMADQSSAELSSNSEQGQSVPLN. A disordered region spans residues 145–236; sequence TMADQSSAEL…TAATTPDGAA (92 aa). Over residues 168–207 the composition is skewed to low complexity; sequence TSTTTDPATTSTPPASVDTTATNTQTPVVTAPAPAVDPQQ. Residues 208-218 are compositionally biased toward polar residues; it reads NAVVSPSQANV. A compositionally biased stretch (low complexity) spans 219–236; the sequence is DTAATPAPTAATTPDGAA.

Belongs to the RodZ family.

It localises to the cell inner membrane. In terms of biological role, cytoskeletal protein that is involved in cell-shape control through regulation of the length of the long axis. This chain is Cytoskeleton protein RodZ, found in Escherichia coli O157:H7.